The sequence spans 708 residues: ARF GTPase-activating protein GIT2 (708 aa).

In terms of domain architecture, Arf-GAP spans 1–124 (MSKRLRSSDV…AFVHRLPCRE (124 aa)). A C4-type zinc finger spans residues 11 to 34 (CADCNGPDPSWASVNRGTFICDEC). ANK repeat units follow at residues 132-161 (DLSK…QANF), 166-195 (KGST…DPGT), and 199-228 (SGKT…ELTD). A disordered region spans residues 376-592 (STQHSTESQD…SPTLPSTEDV (217 aa)). Acidic residues predominate over residues 384–401 (QDNDQPDYDSVASDEDTD). Ser-393 and Ser-396 each carry phosphoserine. Phosphothreonine is present on Thr-400. A compositionally biased stretch (polar residues) spans 407 to 438 (SKANRQKLQTLQSENSSLRRQATASACQVQTG). Positions 504-518 (TSSSSLPSFPSTLSW) are enriched in low complexity. Phosphoserine is present on residues Ser-508, Ser-511, and Ser-519. Residues 519-532 (SRDESARRASRLEK) are compositionally biased toward basic and acidic residues. Thr-536 carries the phosphothreonine modification. Ser-563 bears the Phosphoserine mark.

As to quaternary structure, may form heterooligomers with GIT1. Directly interacts with protein Piccolo/PCLO. Interacts with PPFIA1 and PPFIA2. Interacts with ARHGEF7. Identified in a complex with ARHGEF6 and BIN2. Interacts with PAK3. Interacts with PXN/paxillin. Interacts with TGFB1I1. Forms a complex with EFNB1 and GRB4/NCK2. In terms of processing, tyrosine phosphorylated when coexpressed in cells with PTK2/FAK1 and SRC. As to expression, expressed in the brain (at protein level).

Functionally, GTPase-activating protein for ADP ribosylation factor family members, including ARF1. This chain is ARF GTPase-activating protein GIT2 (Git2), found in Mus musculus (Mouse).